Reading from the N-terminus, the 355-residue chain is Capsular polysaccharide biosynthesis glycosyltransferase CapH (355 aa).

Belongs to the glycosyltransferase group 1 family. Glycosyltransferase 4 subfamily.

It participates in capsule biogenesis; capsule polysaccharide biosynthesis. Its function is as follows. Required for the biosynthesis of type 1 capsular polysaccharide. This chain is Capsular polysaccharide biosynthesis glycosyltransferase CapH (capH), found in Staphylococcus aureus.